The following is a 583-amino-acid chain: Estrogen receptor (583 aa).

The interval methionine 1–phenylalanine 138 is modulating. 2 NR C4-type zinc fingers span residues cysteine 139 to cysteine 159 and cysteine 175 to cysteine 199. The nuclear receptor DNA-binding region spans cysteine 139–methionine 204. The hinge stretch occupies residues methionine 205–methionine 265. Positions glutamate 220 to asparagine 263 are disordered. Positions proline 266–histidine 501 constitute an NR LBD domain. A disordered region spans residues proline 506–proline 583. Low complexity predominate over residues alanine 539–serine 551.

The protein belongs to the nuclear hormone receptor family. NR3 subfamily. In terms of assembly, binds DNA as a homodimer. Can form a heterodimer with ER-beta.

The protein resides in the nucleus. Functionally, the steroid hormones and their receptors are involved in the regulation of eukaryotic gene expression and affect cellular proliferation and differentiation in target tissues. This chain is Estrogen receptor (esr1), found in Oreochromis aureus (Israeli tilapia).